The chain runs to 593 residues: Scarecrow-like protein 1 (593 aa).

2 disordered regions span residues 29 to 61 (NPKL…PCLT) and 188 to 216 (YQNE…SKEV). Residues 35-48 (LNENGNNNGVSSAQ) are compositionally biased toward polar residues. Over residues 202 to 211 (SSSADSNSHV) the composition is skewed to low complexity. The GRAS domain maps to 213–593 (SKEVVSQATP…KSLIVASAWR (381 aa)). The interval 220–280 (ATPKQILISC…AARMAASGKF (61 aa)) is leucine repeat I (LRI). The VHIID stretch occupies residues 299 to 364 (MQVLFEVCPC…GKRPRLRLTG (66 aa)). The VHIID signature appears at 330 to 334 (VHIID). The leucine repeat II (LRII) stretch occupies residues 380–411 (IIGLRLEQLAEDNGVSFKFKAMPSKTSIVSPS). The PFYRE stretch occupies residues 421 to 515 (LIVNFAFQLH…RQCLARDIVN (95 aa)). Residues 518–593 (ACEGEERIER…KSLIVASAWR (76 aa)) are SAW.

This sequence belongs to the GRAS family. In terms of tissue distribution, expressed in seedlings, roots, shoots, leaves, flowers and siliques.

The protein localises to the nucleus. Probable transcription factor involved in plant development. This Arabidopsis thaliana (Mouse-ear cress) protein is Scarecrow-like protein 1 (SCL1).